A 262-amino-acid chain; its full sequence is VPS74-like protein DDB_G0288371 (262 aa).

This sequence belongs to the GOLPH3/VPS74 family.

Its subcellular location is the golgi apparatus. It localises to the golgi stack membrane. In terms of biological role, phosphatidylinositol-4-phosphate-binding protein that links Golgi membranes to the cytoskeleton and may participate in the tensile force required for vesicle budding from the Golgi. Thereby, may play a role in Golgi membrane trafficking. May also bind to the coatomer to regulate Golgi membrane trafficking. May play a role in anterograde transport from the Golgi to the plasma membrane and regulate secretion. May be involved in vacuolar protein sorting. The polypeptide is VPS74-like protein DDB_G0288371 (Dictyostelium discoideum (Social amoeba)).